A 561-amino-acid polypeptide reads, in one-letter code: Foot protein 1 variant 1 (561 aa).

Residues 1–20 (MARNMNILTLFAVLIGSASA) form the signal peptide. Tyr-22 is modified (3',4'-dihydroxyphenylalanine). At Pro-33 the chain carries 4-hydroxyproline. Residues 41-50 (VHPPAWTAWK) form an A-1; approximate repeat. The interval 41–410 (VHPPAWTAWK…APPPAWTAWK (370 aa)) is 13 X 10 AA A-P-P-P-A-W-T-A-W-K. 7'-hydroxytryptophan is present on residues Trp-46, Trp-49, Trp-56, and Trp-59. Trp-46, Trp-49, Trp-56, and Trp-59 each carry a C-linked (Man) hydroxytryptophan glycan. Residues 51 to 60 (AHPPAWTAWK) form an A-2; approximate repeat. A B-1 repeat occupies 61–70 (ATPKPWTAWK). Positions 61–440 (ATPKPWTAWK…ATPKPWTAWR (380 aa)) are 27 X 10 AA A-T-P-K-P-W-T-A-W-K. Pro-65 is subject to 4-hydroxyproline. Trp-66 is a glycosylation site (C-linked (Man) tryptophan). At Trp-69 the chain carries 7'-hydroxytryptophan. Trp-69 carries C-linked (Man) hydroxytryptophan glycosylation. The A-3 repeat unit spans residues 71 to 80 (APPPAWTAWK). 4-hydroxyproline occurs at positions 72, 73, and 74. 7'-hydroxytryptophan is present on residues Trp-76 and Trp-79. 2 C-linked (Man) hydroxytryptophan glycosylation sites follow: Trp-76 and Trp-79. Residues 81 to 90 (ATPKPWTAWK) form a B-2 repeat. 4-hydroxyproline is present on Pro-85. A C-linked (Man) tryptophan glycan is attached at Trp-86. Trp-89 carries the post-translational modification 7'-hydroxytryptophan. C-linked (Man) hydroxytryptophan glycosylation occurs at Trp-89. The stretch at 91 to 100 (APPPTWTAWK) is one A-4; approximate repeat. Pro-92, Pro-93, and Pro-94 each carry 4-hydroxyproline. 7'-hydroxytryptophan is present on residues Trp-96 and Trp-99. Trp-96 and Trp-99 each carry a C-linked (Man) hydroxytryptophan glycan. The stretch at 101–110 (ATPKPWTAWK) is one B-3 repeat. A 4-hydroxyproline modification is found at Pro-105. C-linked (Man) tryptophan glycosylation occurs at Trp-106. Trp-109 is modified (7'-hydroxytryptophan). Trp-109 carries a C-linked (Man) hydroxytryptophan glycan. The stretch at 111-120 (APPPAWTAWK) is one A-5 repeat. 4-hydroxyproline is present on residues Pro-112, Pro-113, and Pro-114. Residues Trp-116 and Trp-119 each carry the 7'-hydroxytryptophan modification. Residues Trp-116 and Trp-119 are each glycosylated (C-linked (Man) hydroxytryptophan). The B-4; approximate repeat unit spans residues 121 to 130 (ATLKPWTAWK). Pro-125 bears the 4-hydroxyproline mark. A glycan (C-linked (Man) tryptophan) is linked at Trp-126. Trp-129 carries the 7'-hydroxytryptophan modification. The C-linked (Man) hydroxytryptophan glycan is linked to Trp-129. The stretch at 131-140 (ATPKPWTAWK) is one B-5 repeat. Pro-135 carries the 4-hydroxyproline modification. Trp-136 is a glycosylation site (C-linked (Man) tryptophan). Trp-139 carries the 7'-hydroxytryptophan modification. C-linked (Man) hydroxytryptophan glycosylation occurs at Trp-139. Residues 141–150 (ATPKPWTAWK) form a B-6 repeat. Position 145 is a 4-hydroxyproline (Pro-145). The C-linked (Man) tryptophan glycan is linked to Trp-146. A 7'-hydroxytryptophan modification is found at Trp-149. Trp-149 carries C-linked (Man) hydroxytryptophan glycosylation. A B-7 repeat occupies 151 to 160 (ATPKPWTAWK). A 4-hydroxyproline modification is found at Pro-155. Trp-156 is a glycosylation site (C-linked (Man) tryptophan). Trp-159 carries the 7'-hydroxytryptophan modification. A glycan (C-linked (Man) hydroxytryptophan) is linked at Trp-159. Residues 161-170 (ATPKPWTAWK) form a B-8 repeat. Pro-165 carries the post-translational modification 4-hydroxyproline. A glycan (C-linked (Man) tryptophan) is linked at Trp-166. Trp-169 carries the 7'-hydroxytryptophan modification. C-linked (Man) hydroxytryptophan glycosylation occurs at Trp-169. One copy of the B-9; approximate repeat lies at 171–180 (ATPKPWTVWK). Pro-175 bears the 4-hydroxyproline mark. Residue Trp-176 is glycosylated (C-linked (Man) tryptophan). A 7'-hydroxytryptophan modification is found at Trp-179. Trp-179 carries C-linked (Man) hydroxytryptophan glycosylation. The B-10 repeat unit spans residues 181 to 190 (ATPKPWTAWK). Pro-185 carries the post-translational modification 4-hydroxyproline. Trp-186 carries a C-linked (Man) tryptophan glycan. Position 189 is a 7'-hydroxytryptophan (Trp-189). Residue Trp-189 is glycosylated (C-linked (Man) hydroxytryptophan). The stretch at 191–200 (ATPKPWTAWK) is one B-11 repeat. At Pro-195 the chain carries 4-hydroxyproline. The C-linked (Man) tryptophan glycan is linked to Trp-196. Trp-199 carries the post-translational modification 7'-hydroxytryptophan. Residue Trp-199 is glycosylated (C-linked (Man) hydroxytryptophan). The stretch at 201–210 (APPPAWSAWK) is one A-6; approximate repeat. 3 positions are modified to 4-hydroxyproline: Pro-202, Pro-203, and Pro-204. Trp-206 and Trp-209 each carry 7'-hydroxytryptophan. C-linked (Man) hydroxytryptophan glycosylation is found at Trp-206 and Trp-209. A B-12; approximate repeat occupies 211–220 (ATPKPWTVWK). Pro-215 carries the post-translational modification 4-hydroxyproline. Trp-216 is a glycosylation site (C-linked (Man) tryptophan). Trp-219 is subject to 7'-hydroxytryptophan. Trp-219 is a glycosylation site (C-linked (Man) hydroxytryptophan). Residues 221-230 (ATPKPWTAWK) form a B-13 repeat. Position 225 is a 4-hydroxyproline (Pro-225). C-linked (Man) tryptophan glycosylation is present at Trp-226. Trp-229 carries the post-translational modification 7'-hydroxytryptophan. A glycan (C-linked (Man) hydroxytryptophan) is linked at Trp-229. A B-14 repeat occupies 231–240 (ATPKPWTAWK). A 4-hydroxyproline modification is found at Pro-235. Trp-236 carries C-linked (Man) tryptophan glycosylation. Residue Trp-239 is modified to 7'-hydroxytryptophan. A C-linked (Man) hydroxytryptophan glycan is attached at Trp-239. The B-15; approximate repeat unit spans residues 241–250 (ATPKPWTVWK). 4-hydroxyproline is present on Pro-245. A C-linked (Man) tryptophan glycan is attached at Trp-246. Trp-249 carries the post-translational modification 7'-hydroxytryptophan. C-linked (Man) hydroxytryptophan glycosylation occurs at Trp-249. The B-16 repeat unit spans residues 251-260 (ATPKPWTAWK). The residue at position 255 (Pro-255) is a 4-hydroxyproline. Trp-256 carries C-linked (Man) tryptophan glycosylation. Position 259 is a 7'-hydroxytryptophan (Trp-259). Trp-259 carries a C-linked (Man) hydroxytryptophan glycan. The stretch at 261–270 (APPPAWTAWK) is one A-7 repeat. 4-hydroxyproline occurs at positions 262, 263, and 264. A 7'-hydroxytryptophan mark is found at Trp-266 and Trp-269. Trp-266 and Trp-269 each carry a C-linked (Man) hydroxytryptophan glycan. The B-17 repeat unit spans residues 271-280 (ATPKPWTAWK). A 4-hydroxyproline modification is found at Pro-275. A C-linked (Man) tryptophan glycan is attached at Trp-276. Trp-279 is subject to 7'-hydroxytryptophan. A glycan (C-linked (Man) hydroxytryptophan) is linked at Trp-279. One copy of the A-8; approximate repeat lies at 281–290 (APPPTWTAWK). A 4-hydroxyproline mark is found at Pro-282, Pro-283, and Pro-284. 2 positions are modified to 7'-hydroxytryptophan: Trp-286 and Trp-289. Trp-286 and Trp-289 each carry a C-linked (Man) hydroxytryptophan glycan. A B-18 repeat occupies 291–300 (ATPKPWTAWK). Pro-295 carries the post-translational modification 4-hydroxyproline. The C-linked (Man) tryptophan glycan is linked to Trp-296. At Trp-299 the chain carries 7'-hydroxytryptophan. Trp-299 is a glycosylation site (C-linked (Man) hydroxytryptophan). An A-9; approximate repeat occupies 301 to 310 (APPPAWSAWK). Residues Pro-302, Pro-303, and Pro-304 each carry the 4-hydroxyproline modification. Residues Trp-306 and Trp-309 each carry the 7'-hydroxytryptophan modification. C-linked (Man) hydroxytryptophan glycosylation is found at Trp-306 and Trp-309. Residues 311-320 (ATPKPWTAWK) form a B-19 repeat. Residue Pro-315 is modified to 4-hydroxyproline. C-linked (Man) tryptophan glycosylation occurs at Trp-316. At Trp-319 the chain carries 7'-hydroxytryptophan. C-linked (Man) hydroxytryptophan glycosylation occurs at Trp-319. The stretch at 321–330 (ATPKPWTAWK) is one B-20 repeat. At Pro-325 the chain carries 4-hydroxyproline. Trp-326 carries a C-linked (Man) tryptophan glycan. The residue at position 329 (Trp-329) is a 7'-hydroxytryptophan. Trp-329 carries C-linked (Man) hydroxytryptophan glycosylation. A B-21 repeat occupies 331–340 (ATPKPWTAWK). At Pro-335 the chain carries 4-hydroxyproline. Residue Trp-336 is glycosylated (C-linked (Man) tryptophan). Position 339 is a 7'-hydroxytryptophan (Trp-339). C-linked (Man) hydroxytryptophan glycosylation is present at Trp-339. Residues 341 to 350 (ATPKPWTAWK) form a B-22 repeat. At Pro-345 the chain carries 4-hydroxyproline. C-linked (Man) tryptophan glycosylation occurs at Trp-346. Position 349 is a 7'-hydroxytryptophan (Trp-349). Trp-349 is a glycosylation site (C-linked (Man) hydroxytryptophan). The A-10; approximate repeat unit spans residues 351-360 (VPPPAWTAWK). 4-hydroxyproline is present on residues Pro-352, Pro-353, and Pro-354. A 7'-hydroxytryptophan mark is found at Trp-356, Trp-359, Trp-366, and Trp-369. C-linked (Man) hydroxytryptophan glycans are attached at residues Trp-356, Trp-359, Trp-366, and Trp-369. An A-11; approximate repeat occupies 361 to 370 (AHPPAWTAWK). A B-23 repeat occupies 371-380 (ATPKPWTAWK). The residue at position 375 (Pro-375) is a 4-hydroxyproline. A glycan (C-linked (Man) tryptophan) is linked at Trp-376. A 7'-hydroxytryptophan modification is found at Trp-379. A glycan (C-linked (Man) hydroxytryptophan) is linked at Trp-379. The A-12 repeat unit spans residues 381–390 (APPPAWTAWK). A 4-hydroxyproline mark is found at Pro-382, Pro-383, and Pro-384. Residues Trp-386 and Trp-389 each carry the 7'-hydroxytryptophan modification. Residues Trp-386 and Trp-389 are each glycosylated (C-linked (Man) hydroxytryptophan). A B-24 repeat occupies 391 to 400 (ATPKPWTAWK). A 4-hydroxyproline modification is found at Pro-395. C-linked (Man) tryptophan glycosylation occurs at Trp-396. Residue Trp-399 is modified to 7'-hydroxytryptophan. Residue Trp-399 is glycosylated (C-linked (Man) hydroxytryptophan). Residues 401 to 410 (APPPAWTAWK) form an A-13 repeat. Pro-402, Pro-403, and Pro-404 each carry 4-hydroxyproline. 2 positions are modified to 7'-hydroxytryptophan: Trp-406 and Trp-409. 2 C-linked (Man) hydroxytryptophan glycosylation sites follow: Trp-406 and Trp-409. A B-25 repeat occupies 411–420 (ATPKPWTAWK). Residue Pro-415 is modified to 4-hydroxyproline. C-linked (Man) tryptophan glycosylation is present at Trp-416. Position 419 is a 7'-hydroxytryptophan (Trp-419). A glycan (C-linked (Man) hydroxytryptophan) is linked at Trp-419. One copy of the B-26; approximate repeat lies at 421–430 (ATPKPWTVWK). Position 425 is a 4-hydroxyproline (Pro-425). A C-linked (Man) tryptophan glycan is attached at Trp-426. Position 429 is a 7'-hydroxytryptophan (Trp-429). A glycan (C-linked (Man) hydroxytryptophan) is linked at Trp-429. Residues 431–440 (ATPKPWTAWR) form a B-27; approximate repeat. Pro-435 carries the 4-hydroxyproline modification. Trp-436 is a glycosylation site (C-linked (Man) tryptophan). Trp-439 bears the 7'-hydroxytryptophan mark. Trp-439 is a glycosylation site (C-linked (Man) hydroxytryptophan). The interval 452–507 (GHGYGGYGKPGKPGKPGSKGPRGPAGPPGATGKTGRTGATGKRGPPGYPGKPGVPG) is disordered. Residues 453–462 (HGYGGYGKPG) show a composition bias toward gly residues. One can recognise a Collagen-like domain in the interval 459-510 (GKPGKPGKPGSKGPRGPAGPPGATGKTGRTGATGKRGPPGYPGKPGVPGRNG). Low complexity predominate over residues 466–496 (KPGSKGPRGPAGPPGATGKTGRTGATGKRGP). Residues Pro-497, Pro-500, and Pro-506 each carry the 4-hydroxyproline modification.

As to expression, produced by the byssal gland.

It is found in the secreted. Provides adhesiveness to the mussel's foot. Mussels produce one of the strongest water insoluble glues. The mussel's adhesive is a bundle of threads, called a byssus, formed by a fibrous collagenous core coated with adhesive proteins. In Perna viridis (Asian green mussel), this protein is Foot protein 1 variant 1.